The primary structure comprises 242 residues: Biosynthetic peptidoglycan transglycosylase (242 aa).

Residues 19–39 (ILAALAVFWGGGIALFSVVPV) traverse the membrane as a helical segment.

This sequence belongs to the glycosyltransferase 51 family.

The protein localises to the cell inner membrane. The enzyme catalyses [GlcNAc-(1-&gt;4)-Mur2Ac(oyl-L-Ala-gamma-D-Glu-L-Lys-D-Ala-D-Ala)](n)-di-trans,octa-cis-undecaprenyl diphosphate + beta-D-GlcNAc-(1-&gt;4)-Mur2Ac(oyl-L-Ala-gamma-D-Glu-L-Lys-D-Ala-D-Ala)-di-trans,octa-cis-undecaprenyl diphosphate = [GlcNAc-(1-&gt;4)-Mur2Ac(oyl-L-Ala-gamma-D-Glu-L-Lys-D-Ala-D-Ala)](n+1)-di-trans,octa-cis-undecaprenyl diphosphate + di-trans,octa-cis-undecaprenyl diphosphate + H(+). The protein operates within cell wall biogenesis; peptidoglycan biosynthesis. In terms of biological role, peptidoglycan polymerase that catalyzes glycan chain elongation from lipid-linked precursors. This Salmonella typhi protein is Biosynthetic peptidoglycan transglycosylase.